An 877-amino-acid chain; its full sequence is MLGSLLLLAPLAGAAVIGSRADTQQCPGYKASNVQENDRSLTADLTLAGKPCNTYGTDLHNLKLLVEYQTDERLHVKIYDAEERVYQVPEKVTPRVDSGDGSSKDSALKFEYEEEPFSFTVKRDDEVLFDSSAENLIFQSQYLKLRTWLPENPYLYGLGEHTDPLRLSTTNYTRTFWNRDAYGTSANSNLYGTHPVYYDHRGESGTHGVFLLNSNGMDVFIDKTADGKQYLEYNALGGIFDFYFFTGSNPKEASIEYSKIVGLPAMQSYWTFGLHQCRYGYRDVYQVAEVVYNYTKAGIPLETMWTDIDYMDRRRVFSLDPDRFPLEKMRELVGYLHDHDQHYIVMVDPAVSVSDNGAFNRGLEQDVFLKTQNGSLYKGAVWPGVTAYPDWFHPDIQDYWNSEFSTFFNAETGVDIDGLWIDMNEASNFCPDPCTDPERYSSENNLPPAPPPVRSSSPRPLPGFPADFQPSSASRSQKRIVKAKVGLEGRDLLNPPYKIRNEAGSLSNKTINTGIVHAGEGYAEYDTHNLYGTMMSSSSREAMQYRRPEVRPLVITRSTYAGAGRDVGHWLGDNFSKWEHYRISIAEGLAFASMFQVPMVGADVCGFAGNTTEELCARWASLGAFFTFYRNHNEIGNIGQEFYVWPTVAESARKAIDIRYRLLDYIYTSFYKQSQTGEPFLQPVFYLYPEDENTFSIDLQFFYGDAILVSPVPDKGLTSVDAYFPDDIFYDWYTGTPVRGHGANITLSNIDITHIPLHIRGGSIIPIRSSSAMTTTELREKSFQLIIAPGLDGTASGSLYLDDGDSLEQKATLEVEFEYRKGVLHIDGKFELHASLVESVTLLGQGKGGSRARREDGTKKTIQTNLELSKPTEIKLE.

Residues 1-14 (MLGSLLLLAPLAGA) form the signal peptide. N-linked (GlcNAc...) asparagine glycans are attached at residues Asn171, Asn293, and Asn373. Asp422 serves as the catalytic Nucleophile. Glu425 is an active-site residue. The tract at residues 432–476 (DPCTDPERYSSENNLPPAPPPVRSSSPRPLPGFPADFQPSSASRS) is disordered. Positions 447–463 (PPAPPPVRSSSPRPLPG) are enriched in pro residues. Asn508 carries an N-linked (GlcNAc...) asparagine glycan. The Proton donor role is filled by Asp573. N-linked (GlcNAc...) asparagine glycans are attached at residues Asn574, Asn610, and Asn744.

It belongs to the glycosyl hydrolase 31 family.

The protein resides in the secreted. The catalysed reaction is Hydrolysis of terminal, non-reducing (1-&gt;4)-linked alpha-D-glucose residues with release of alpha-D-glucose.. It carries out the reaction Hydrolysis of terminal, non-reducing beta-D-glucosyl residues with release of beta-D-glucose.. Its function is as follows. Glucosidase involved in the degradation of cellulosic biomass. Has both alpha- and beta-glucosidase activity. In Aspergillus oryzae (strain ATCC 42149 / RIB 40) (Yellow koji mold), this protein is Probable alpha/beta-glucosidase agdC (agdC).